Consider the following 1851-residue polypeptide: Voltage-dependent calcium channel type A subunit alpha-1 (1851 aa).

Residues 1–38 (MGGPKKEENPPGGGPTSLFILTEDNPIRKYTRFIIEWP) lie on the Cytoplasmic side of the membrane. The stretch at 25 to 316 (NPIRKYTRFI…LVLGVLSGEF (292 aa)) is one I repeat. A helical membrane pass occupies residues 39–57 (PFEYAVLLTIIANCVVLAL). Residues 58 to 75 (EEHLPGGDKTVLAQKLEK) lie on the Extracellular side of the membrane. A helical transmembrane segment spans residues 76-95 (TEAYFLCIFCVEASLKILAL). Topologically, residues 96–107 (GLVLHKHSYLRN) are cytoplasmic. Residues 108 to 128 (IWNIMDFFVVVTGFMTQYPQI) traverse the membrane as a helical segment. At 129–133 (GPEVD) the chain is on the extracellular side. A helical transmembrane segment spans residues 134–152 (LRTLRAIRVLRPLKLVSGI). The Cytoplasmic portion of the chain corresponds to 153–171 (PSLQVVLKSIIKAMAPLLQ). The helical transmembrane segment at 172-191 (IGLLVLFAIVIFAIIGLEFY) threads the bilayer. Over 192–288 (SGALHKTCYS…WTNDALGSAF (97 aa)) the chain is Extracellular. N-linked (GlcNAc...) asparagine glycosylation is found at Asn234 and Asn235. The helical transmembrane segment at 289 to 313 (NWIYFVPLIVIGSFFMLNLVLGVLS) threads the bilayer. Residues 314–441 (GEFSNERNRV…FWIRHTVKTQ (128 aa)) lie on the Cytoplasmic side of the membrane. The tract at residues 381–417 (RKKLKSLGKSKSTDTEEEEAEEDYGDDGYLKTRSKPQ) is disordered. A compositionally biased stretch (acidic residues) spans 395-406 (TEEEEAEEDYGD). One copy of the II repeat lies at 427–670 (EKRFRFWIRH…VFLAIAVDNL (244 aa)). A helical transmembrane segment spans residues 442-460 (WFYWFVIVLVFLNTVCVAV). The Extracellular segment spans residues 461 to 475 (EHYGQPSFLTEFLYY). Residues 476–495 (AEFIFLGLFMSEMFIKMYAL) form a helical membrane-spanning segment. The Cytoplasmic segment spans residues 496–503 (GPRIYFES). Residues 504–522 (SFNRFDCVVISGSIFEVIW) form a helical membrane-spanning segment. The Extracellular segment spans residues 523-531 (SEVKGGSFG). A helical membrane pass occupies residues 532–550 (LSVLRALRLLRIFKVTKYW). At 551–569 (SSLRNLVISLLNSMRSIIS) the chain is on the cytoplasmic side. The chain crosses the membrane as a helical span at residues 570–589 (LLFLLFLFILIFALLGMQLF). Residues 590-642 (GGQFNLPGGTPETNFNTFPIALLTVFQILTGEDWNEVMYQGIISQGGAQKGMI) lie on the Extracellular side of the membrane. Residues 643–667 (YSIYFIVLVLFGNYTLLNVFLAIAV) traverse the membrane as a helical segment. The Cytoplasmic portion of the chain corresponds to 668–767 (DNLANAQELT…IRRGAHWVVN (100 aa)). The segment at 710-741 (ENGDGAVAPSKSKGKKKEEEKKEEEEVTEGPK) is disordered. The III repeat unit spans residues 762 to 1049 (AHWVVNLPYF…IITFQEQGEA (288 aa)). Residues 768-786 (LPYFDFFIMVVISMSSIAL) traverse the membrane as a helical segment. Over 787 to 802 (AAEDPVRENSRRNKIL) the chain is Extracellular. Residues 803 to 822 (NYFDYAFTGVFTIEMLLKIV) traverse the membrane as a helical segment. The Cytoplasmic segment spans residues 823–834 (DLGVILHPGSYL). Residues 835-853 (REFWNIMDAVVVICAAVSF) traverse the membrane as a helical segment. At 854–866 (GFDMSGSSAGQNL) the chain is on the extracellular side. Asn865 carries an N-linked (GlcNAc...) asparagine glycan. A helical membrane pass occupies residues 867-885 (STIKSLRVLRVLRPLKTIK). Residues 886–904 (RVPKLKAVFDCVVNSLKNV) lie on the Cytoplasmic side of the membrane. A helical transmembrane segment spans residues 905 to 924 (VNILIVYILFQFIFSVIGVQ). Over 925 to 1013 (LFNGKFFYCT…EDRGPIQNFR (89 aa)) the chain is Extracellular. The helical transmembrane segment at 1014–1038 (IEMSIFYIVYFIVFPFFFVNIFVAL) threads the bilayer. The Cytoplasmic segment spans residues 1039 to 1093 (IIITFQEQGEAELQDGEIDKNQKSCIDFTIGARPLERYMPKNRNTFKYKVWRIVV). One copy of the IV repeat lies at 1086–1347 (YKVWRIVVST…DNFDYLTRDS (262 aa)). A helical membrane pass occupies residues 1094-1122 (STPFEYFIMMLIVFNTLLLMMKYHNQGDM). The Extracellular portion of the chain corresponds to 1123 to 1127 (YEKSL). Residues 1128–1147 (KYINMGFTGMFSVETVLKII) form a helical membrane-spanning segment. Over 1148-1155 (GFGVKNFF) the chain is Cytoplasmic. A helical membrane pass occupies residues 1156–1174 (KDPWNIFDLITVLGSIVDA). Residues 1175 to 1184 (LWMEFGHDDS) are Extracellular-facing. Residues 1185–1203 (NSINVGFLRLFRAARLIKL) traverse the membrane as a helical segment. Over 1204–1222 (LRQGYTIRILLWTFVQSFK) the chain is Cytoplasmic. The helical transmembrane segment at 1223-1242 (ALPYVCLLIAMLFFIYAIIG) threads the bilayer. At 1243-1308 (MQVFGNIKLG…DAEKAPGEYC (66 aa)) the chain is on the extracellular side. Residues 1306 to 1348 (EYCGSTLAYAYFVSFIFFCSFLMLNLFVAVIMDNFDYLTRDSS) form a phenylalkylamine binding region. A helical membrane pass occupies residues 1309–1333 (GSTLAYAYFVSFIFFCSFLMLNLFV). The Cytoplasmic portion of the chain corresponds to 1334–1851 (AVIMDNFDYL…HSDSDEEDWC (518 aa)). In terms of domain architecture, EF-hand spans 1353–1388 (HHLDEFVRIWAEYDPNATGKIHYTEMYDMLKNMDPP). The Ca(2+) site is built by Asp1366, Asn1368, Thr1370, Lys1372, and Glu1377. 4 disordered regions span residues 1513–1572 (DASR…HHDI), 1588–1653 (TRHP…SPAR), 1685–1764 (RAGI…DRDR), and 1823–1851 (VLPSPVLNGFKPKSGLNPRHSDSDEEDWC). Residues 1589–1600 (RHPRHGNSHPRY) are compositionally biased toward basic residues. The span at 1604–1619 (SWSASTSPARSPSPSR) shows a compositional bias: low complexity. Composition is skewed to polar residues over residues 1637–1649 (YGTTSLCQRSRSP) and 1698–1710 (KPSTLQLKPTNIN). Over residues 1734–1764 (HHRDLLRDPRDMYYSSRERERDRERLRDRDR) the composition is skewed to basic and acidic residues.

This sequence belongs to the calcium channel alpha-1 subunit (TC 1.A.1.11) family. Expressed widely in the embryonic nervous system.

The protein resides in the membrane. Its function is as follows. Voltage-sensitive calcium channels (VSCC) mediate the entry of calcium ions into excitable cells and are also involved in a variety of calcium-dependent processes, including muscle contraction, neurotransmitter release, gene expression, cell motility, cell division and cell death. Probably encodes a dihydropyridine-insensitive current. Vital for survival to adulthood. This Drosophila melanogaster (Fruit fly) protein is Voltage-dependent calcium channel type A subunit alpha-1 (cac).